The following is a 519-amino-acid chain: Chaperone SurA (519 aa).

The first 31 residues, 1–31 (MMRSLHSLRRMSGTVLALMLAAGLPLSAAQA), serve as a signal peptide directing secretion. Low complexity-rich tracts occupy residues 31–45 (AQPA…QKPA) and 197–207 (PAAAQATRAPA). 2 disordered regions span residues 31-50 (AQPA…PAPS) and 196-221 (NPAA…PAQS). Residues 223–324 (PAMLVLAQIL…NGFHILKVVD (102 aa)) form the PpiC 1 domain. The disordered stretch occupies residues 328 to 361 (GGQPAQAARPAPAPAPQQPSSFQEGPSVAAPQGP). The 100-residue stretch at 364 to 463 (VTQTHARHIL…FGWHLIQVLE (100 aa)) folds into the PpiC 2 domain.

The protein resides in the periplasm. It carries out the reaction [protein]-peptidylproline (omega=180) = [protein]-peptidylproline (omega=0). Its function is as follows. Chaperone involved in the correct folding and assembly of outer membrane proteins. Recognizes specific patterns of aromatic residues and the orientation of their side chains, which are found more frequently in integral outer membrane proteins. May act in both early periplasmic and late outer membrane-associated steps of protein maturation. The chain is Chaperone SurA from Bordetella pertussis (strain Tohama I / ATCC BAA-589 / NCTC 13251).